Here is a 150-residue protein sequence, read N- to C-terminus: UPF0178 protein AZOSEA36080 (150 aa).

Belongs to the UPF0178 family.

This is UPF0178 protein AZOSEA36080 from Aromatoleum aromaticum (strain DSM 19018 / LMG 30748 / EbN1) (Azoarcus sp. (strain EbN1)).